Reading from the N-terminus, the 217-residue chain is 3,4-dihydroxy-2-butanone 4-phosphate synthase (217 aa).

D-ribulose 5-phosphate-binding positions include 37 to 38, Asp-42, 150 to 154, and Glu-174; these read RE and RGGHT. Mg(2+) is bound at residue Glu-38. His-153 contributes to the Mg(2+) binding site.

Belongs to the DHBP synthase family. Homodimer. Mg(2+) is required as a cofactor. The cofactor is Mn(2+).

It catalyses the reaction D-ribulose 5-phosphate = (2S)-2-hydroxy-3-oxobutyl phosphate + formate + H(+). Its pathway is cofactor biosynthesis; riboflavin biosynthesis; 2-hydroxy-3-oxobutyl phosphate from D-ribulose 5-phosphate: step 1/1. Catalyzes the conversion of D-ribulose 5-phosphate to formate and 3,4-dihydroxy-2-butanone 4-phosphate. This Enterobacter sp. (strain 638) protein is 3,4-dihydroxy-2-butanone 4-phosphate synthase.